Reading from the N-terminus, the 156-residue chain is SsrA-binding protein (156 aa).

It belongs to the SmpB family.

The protein localises to the cytoplasm. Its function is as follows. Required for rescue of stalled ribosomes mediated by trans-translation. Binds to transfer-messenger RNA (tmRNA), required for stable association of tmRNA with ribosomes. tmRNA and SmpB together mimic tRNA shape, replacing the anticodon stem-loop with SmpB. tmRNA is encoded by the ssrA gene; the 2 termini fold to resemble tRNA(Ala) and it encodes a 'tag peptide', a short internal open reading frame. During trans-translation Ala-aminoacylated tmRNA acts like a tRNA, entering the A-site of stalled ribosomes, displacing the stalled mRNA. The ribosome then switches to translate the ORF on the tmRNA; the nascent peptide is terminated with the 'tag peptide' encoded by the tmRNA and targeted for degradation. The ribosome is freed to recommence translation, which seems to be the essential function of trans-translation. This is SsrA-binding protein from Staphylococcus haemolyticus (strain JCSC1435).